The primary structure comprises 298 residues: Ethanolamine ammonia-lyase small subunit (298 aa).

Adenosylcob(III)alamin contacts are provided by V210, E231, and C261.

It belongs to the EutC family. In terms of assembly, the basic unit is a heterodimer which dimerizes to form tetramers. The heterotetramers trimerize; 6 large subunits form a core ring with 6 small subunits projecting outwards. The cofactor is adenosylcob(III)alamin.

The protein localises to the bacterial microcompartment. The enzyme catalyses ethanolamine = acetaldehyde + NH4(+). It functions in the pathway amine and polyamine degradation; ethanolamine degradation. In terms of biological role, catalyzes the deamination of various vicinal amino-alcohols to oxo compounds. Allows this organism to utilize ethanolamine as the sole source of nitrogen and carbon in the presence of external vitamin B12. This chain is Ethanolamine ammonia-lyase small subunit, found in Salmonella schwarzengrund (strain CVM19633).